A 213-amino-acid chain; its full sequence is Large ribosomal subunit protein bL25 (213 aa).

Over residues 191-207 (AEPTDAPTAPAAAPGAE) the composition is skewed to low complexity. The disordered stretch occupies residues 191-213 (AEPTDAPTAPAAAPGAEAPKDKA).

It belongs to the bacterial ribosomal protein bL25 family. CTC subfamily. In terms of assembly, part of the 50S ribosomal subunit; part of the 5S rRNA/L5/L18/L25 subcomplex. Contacts the 5S rRNA. Binds to the 5S rRNA independently of L5 and L18.

In terms of biological role, this is one of the proteins that binds to the 5S RNA in the ribosome where it forms part of the central protuberance. The polypeptide is Large ribosomal subunit protein bL25 (Polynucleobacter asymbioticus (strain DSM 18221 / CIP 109841 / QLW-P1DMWA-1) (Polynucleobacter necessarius subsp. asymbioticus)).